Here is a 573-residue protein sequence, read N- to C-terminus: MAAAQTFSANCDPVNFHNLQSYPSESVTYSCKMGNVSSLMEKQDFPNEGFNLDFRPFPEPSCKRGLHQKEFLSYLNITKKEGKNNKKFPSGLGFRREHSLQAEENDYPVFYHKDHRGTEFSKSSLPERGHSDKSRFGPSALKSNVKAFMSIQSLHQSTNKLSKSNGSLNTLGCVGSPPCRGPLQPSNSHSNNPSESGNDEDDDSLSDSKQNSINSLNSYSPSFTVARGQISASLGHINHIGGSLDRASRGLRDTMAGEKGTLSCRNMATLSRLQCSGEPPPPYEYSESVEDVARQLEKRLQEKGMEAQQLRRNASDNDDPFTQVFEDKRRLWMEELDELKQMYMSKLQQISQQALRSQRALQLQLYKVQQEKKRLQEELNSLQGENEELRQKQSQSDNSGPNLEDSKWEISQKAGEISFLKQQLRDSQAEINLKLGEVVSLKVQLREAKALVKEKEKESAELSDCLQALEDVKSQTPVDLPRDSSDTIDVERLRAELMLERRQNEAQILIFETERKVWKEEKDKVLRYQKEIQSSYLEMYQRNQALERQVLELRQGVGQSLSSPASWMDTVET.

Disordered stretches follow at residues 119–138 (EFSK…RFGP), 173–220 (CVGS…NSYS), and 384–405 (GENE…NLED). Basic and acidic residues predominate over residues 125–135 (LPERGHSDKSR). Low complexity predominate over residues 186-196 (SNSHSNNPSES). Polar residues-rich tracts occupy residues 207 to 220 (DSKQ…NSYS) and 392 to 401 (KQSQSDNSGP). Positions 287–474 (ESVEDVARQL…CLQALEDVKS (188 aa)) form a coiled coil.

The protein belongs to the N4BP3 family.

It is found in the cytoplasmic vesicle. It localises to the cell projection. The protein resides in the axon. The protein localises to the dendrite. Functionally, plays a role in axon and dendrite arborization during cranial nerve development. Also important for neural crest migration and early development of other anterior structures including eye, brain and cranial cartilage. In Xenopus laevis (African clawed frog), this protein is NEDD4-binding protein 3-B.